Reading from the N-terminus, the 554-residue chain is Glucose-6-phosphate isomerase (554 aa).

The Proton donor role is filled by Glu359. Active-site residues include His390 and Lys518.

This sequence belongs to the GPI family.

The protein localises to the cytoplasm. The catalysed reaction is alpha-D-glucose 6-phosphate = beta-D-fructose 6-phosphate. It participates in carbohydrate biosynthesis; gluconeogenesis. It functions in the pathway carbohydrate degradation; glycolysis; D-glyceraldehyde 3-phosphate and glycerone phosphate from D-glucose: step 2/4. Catalyzes the reversible isomerization of glucose-6-phosphate to fructose-6-phosphate. The chain is Glucose-6-phosphate isomerase from Pseudomonas fluorescens (strain Pf0-1).